Consider the following 405-residue polypeptide: Arginine biosynthesis bifunctional protein ArgJ (405 aa).

The span at 1–18 shows a compositional bias: polar residues; sequence MTSADKNNPDTSTAQGSS. Residues 1-21 form a disordered region; it reads MTSADKNNPDTSTAQGSSADL. Substrate is bound by residues T167, K189, T200, E281, N400, and T405. The active-site Nucleophile is the T200.

The protein belongs to the ArgJ family. As to quaternary structure, heterotetramer of two alpha and two beta chains.

The protein localises to the cytoplasm. It carries out the reaction N(2)-acetyl-L-ornithine + L-glutamate = N-acetyl-L-glutamate + L-ornithine. The enzyme catalyses L-glutamate + acetyl-CoA = N-acetyl-L-glutamate + CoA + H(+). The protein operates within amino-acid biosynthesis; L-arginine biosynthesis; L-ornithine and N-acetyl-L-glutamate from L-glutamate and N(2)-acetyl-L-ornithine (cyclic): step 1/1. It participates in amino-acid biosynthesis; L-arginine biosynthesis; N(2)-acetyl-L-ornithine from L-glutamate: step 1/4. Functionally, catalyzes two activities which are involved in the cyclic version of arginine biosynthesis: the synthesis of N-acetylglutamate from glutamate and acetyl-CoA as the acetyl donor, and of ornithine by transacetylation between N(2)-acetylornithine and glutamate. In Corynebacterium jeikeium (strain K411), this protein is Arginine biosynthesis bifunctional protein ArgJ.